The following is a 390-amino-acid chain: MSSMLSPPVKKRKIVAPQSQSASASFQSLPDDLILSIVARVPRLYHRTVSLVCKSFRSLLVSPELYKARSVSGHTESCLYLSIACYPDYRMFTLCRKPDQTLTTSEEEEKKKSNGYYLAPVPDPDSHPVYFSSLVTVGSDIYNIAGSHASSNVSILDCRSNTWREAPRLGVELTSVSASVLDRKIFVVGMYADDEESESKNDFFEVLDTETHTWDPQPFNCSETKDKFLNCRTAFIDGKFLVKPWIHRGVVAYNSKESRWEPVQTKMAMSMFNDSYCQIHNVIYLAFDGRIRWYDDALNCWGDVQGLLELGNIPHGPSCVRLADYRGNIAVFWFRYLPDNDDYKWKMIWCAEIALERRTSWEIWGKVLWFDPVLTVPADYEFVKALAATV.

One can recognise an F-box domain in the interval Ser-23–Arg-69. 3 Kelch repeats span residues Asp-140–Arg-183, Ile-185–Ala-234, and Ile-236–Asn-281.

The sequence is that of F-box/kelch-repeat protein At3g06570 from Arabidopsis thaliana (Mouse-ear cress).